The primary structure comprises 446 residues: Chromosomal replication initiator protein DnaA (446 aa).

The interval 1–92 (MENISDLWNS…SQAEEEIDLP (92 aa)) is domain I, interacts with DnaA modulators. The interval 87 to 107 (EEIDLPPSKPNSAQDDSNHLP) is disordered. Residues 93–109 (PSKPNSAQDDSNHLPQS) form a domain II region. Residues 96–107 (PNSAQDDSNHLP) are compositionally biased toward polar residues. Positions 110–326 (MLNPKYTFDT…GALIRVVAYS (217 aa)) are domain III, AAA+ region. Positions 154, 156, 157, and 158 each coordinate ATP. Residues 327–446 (SLINKDINAD…QVEEINDILK (120 aa)) form a domain IV, binds dsDNA region.

This sequence belongs to the DnaA family. In terms of assembly, oligomerizes as a right-handed, spiral filament on DNA at oriC.

It is found in the cytoplasm. Functionally, plays an essential role in the initiation and regulation of chromosomal replication. ATP-DnaA binds to the origin of replication (oriC) to initiate formation of the DNA replication initiation complex once per cell cycle. Binds the DnaA box (a 9 base pair repeat at the origin) and separates the double-stranded (ds)DNA. Forms a right-handed helical filament on oriC DNA; dsDNA binds to the exterior of the filament while single-stranded (ss)DNA is stabiized in the filament's interior. The ATP-DnaA-oriC complex binds and stabilizes one strand of the AT-rich DNA unwinding element (DUE), permitting loading of DNA polymerase. After initiation quickly degrades to an ADP-DnaA complex that is not apt for DNA replication. Binds acidic phospholipids. The protein is Chromosomal replication initiator protein DnaA of Bacillus cereus (strain ATCC 10987 / NRS 248).